The primary structure comprises 290 residues: Pyridoxal 5'-phosphate synthase subunit PdxS (290 aa).

Asp-22 is a D-ribose 5-phosphate binding site. Lys-79 functions as the Schiff-base intermediate with D-ribose 5-phosphate in the catalytic mechanism. Gly-151 contacts D-ribose 5-phosphate. A D-glyceraldehyde 3-phosphate-binding site is contributed by Arg-163. D-ribose 5-phosphate contacts are provided by residues Gly-212 and 233–234; that span reads GS.

This sequence belongs to the PdxS/SNZ family. In terms of assembly, in the presence of PdxT, forms a dodecamer of heterodimers.

It carries out the reaction aldehydo-D-ribose 5-phosphate + D-glyceraldehyde 3-phosphate + L-glutamine = pyridoxal 5'-phosphate + L-glutamate + phosphate + 3 H2O + H(+). It functions in the pathway cofactor biosynthesis; pyridoxal 5'-phosphate biosynthesis. Functionally, catalyzes the formation of pyridoxal 5'-phosphate from ribose 5-phosphate (RBP), glyceraldehyde 3-phosphate (G3P) and ammonia. The ammonia is provided by the PdxT subunit. Can also use ribulose 5-phosphate and dihydroxyacetone phosphate as substrates, resulting from enzyme-catalyzed isomerization of RBP and G3P, respectively. The protein is Pyridoxal 5'-phosphate synthase subunit PdxS of Clostridium botulinum (strain Loch Maree / Type A3).